A 341-amino-acid chain; its full sequence is Phosphoribosylformylglycinamidine cyclo-ligase (341 aa).

It belongs to the AIR synthase family.

The protein localises to the cytoplasm. It catalyses the reaction 2-formamido-N(1)-(5-O-phospho-beta-D-ribosyl)acetamidine + ATP = 5-amino-1-(5-phospho-beta-D-ribosyl)imidazole + ADP + phosphate + H(+). Its pathway is purine metabolism; IMP biosynthesis via de novo pathway; 5-amino-1-(5-phospho-D-ribosyl)imidazole from N(2)-formyl-N(1)-(5-phospho-D-ribosyl)glycinamide: step 2/2. The polypeptide is Phosphoribosylformylglycinamidine cyclo-ligase (Xanthomonas axonopodis pv. citri (strain 306)).